A 256-amino-acid polypeptide reads, in one-letter code: Ribonuclease HII (256 aa).

One can recognise an RNase H type-2 domain in the interval 72 to 256 (QYVAGIDEVG…TFRPVPDYVN (185 aa)). Residues Asp-78, Glu-79, and Asp-170 each coordinate a divalent metal cation.

It belongs to the RNase HII family. The cofactor is Mn(2+). Requires Mg(2+) as cofactor.

The protein localises to the cytoplasm. The catalysed reaction is Endonucleolytic cleavage to 5'-phosphomonoester.. Its function is as follows. Endonuclease that specifically degrades the RNA of RNA-DNA hybrids. The protein is Ribonuclease HII of Limosilactobacillus fermentum (strain NBRC 3956 / LMG 18251) (Lactobacillus fermentum).